A 750-amino-acid polypeptide reads, in one-letter code: MWNLLHETDSAVATARRPRWLCAGALVLAGGFFLLGFLFGWFIKSSNEATNITPKHNMKAFLDELKAENIKKFLYNFTQIPHLAGTEQNFQLAKQIQSQWKEFGLDSVELAHYDVLLSYPNKTHPNYISIINEDGNEIFNTSLFEPPPPGYENVSDIVPPFSAFSPQGMPEGDLVYVNYARTEDFFKLERDMKINCSGKIVIARYGKVFRGNKVKNAQLAGAKGVILYSDPADYFAPGVKSYPDGWNLPGGGVQRGNILNLNGAGDPLTPGYPANEYAYRRGIAEAVGLPSIPVHPIGYYDAQKLLEKMGGSAPPDSSWRGSLKVPYNVGPGFTGNFSTQKVKMHIHSTNEVTRIYNVIGTLRGAVEPDRYVILGGHRDSWVFGGIDPQSGAAVVHEIVRSFGTLKKEGWRPRRTILFASWDAEEFGLLGSTEWAEENSRLLQERGVAYINADSSIEGNYTLRVDCTPLMYSLVHNLTKELKSPDEGFEGKSLYESWTKKSPSPEFSGMPRISKLGSGNDFEVFFQRLGIASGRARYTKNWETNKFSGYPLYHSVYETYELVEKFYDPMFKYHLTVAQVRGGMVFELANSIVLPFDCRDYAVVLRKYADKIYSISMKHPQEMKTYSVSFDSLFSAVKNFTEIASKFSERLQDFDKSNPIVLRMMNDQLMFLERAFIDPLGLPDRPFYRHVIYAPSSHNKYAGESFPGIYDALFDIESKVDPSKAWGEVKRQIYVAAFTVQAAAETLSEVA.

The Cytoplasmic portion of the chain corresponds to 1–19 (MWNLLHETDSAVATARRPR). Serine 10 carries the phosphoserine modification. The helical; Signal-anchor for type II membrane protein transmembrane segment at 20–43 (WLCAGALVLAGGFFLLGFLFGWFI) threads the bilayer. Topologically, residues 44 to 750 (KSSNEATNIT…AAAETLSEVA (707 aa)) are extracellular. 6 N-linked (GlcNAc...) asparagine glycosylation sites follow: asparagine 51, asparagine 76, asparagine 121, asparagine 140, asparagine 153, and asparagine 195. Positions 210 and 257 each coordinate substrate. Ca(2+) contacts are provided by threonine 269 and tyrosine 272. Positions 274–587 (ANEYAYRRGI…QVRGGMVFEL (314 aa)) are NAALADase. Residue asparagine 336 is glycosylated (N-linked (GlcNAc...) asparagine). Residues histidine 377 and aspartate 387 each contribute to the Zn(2+) site. Glutamate 424 lines the substrate pocket. The active-site Nucleophile; for NAALADase activity is glutamate 424. Residue glutamate 425 coordinates Zn(2+). Residues glutamate 433 and glutamate 436 each coordinate Ca(2+). Zn(2+) is bound at residue aspartate 453. Asparagine 459 and asparagine 476 each carry an N-linked (GlcNAc...) asparagine glycan. Residues 517–518 (SG), asparagine 519, 534–536 (RAR), tyrosine 552, and 552–553 (YH) each bind substrate. Histidine 553 is a Zn(2+) binding site. Serine 628 functions as the Charge relay system in the catalytic mechanism. N-linked (GlcNAc...) asparagine glycosylation occurs at asparagine 638. Residues aspartate 666 and histidine 689 each act as charge relay system in the active site. 699–700 (KY) contacts substrate.

Belongs to the peptidase M28 family. M28B subfamily. In terms of assembly, homodimer. Zn(2+) serves as cofactor. In terms of processing, the first two amino acids at the N-terminus of isoform PSMA' appear to be cleaved by limited proteolysis. Post-translationally, the N-terminus is blocked. As to expression, highly expressed in prostate epithelium. Detected in urinary bladder, kidney, testis, ovary, fallopian tube, breast, adrenal gland, liver, esophagus, stomach, small intestine, colon and brain (at protein level). Detected in the small intestine, brain, kidney, liver, spleen, colon, trachea, spinal cord and the capillary endothelium of a variety of tumors. Expressed specifically in jejunum brush border membranes. In the brain, highly expressed in the ventral striatum and brain stem. Also expressed in fetal liver and kidney. Isoform PSMA' is the most abundant form in normal prostate. Isoform PSMA-1 is the most abundant form in primary prostate tumors. Isoform PSMA-9 is specifically expressed in prostate cancer.

Its subcellular location is the cell membrane. It is found in the cytoplasm. The enzyme catalyses Release of an unsubstituted, C-terminal glutamyl residue, typically from Ac-Asp-Glu or folylpoly-gamma-glutamates.. With respect to regulation, the NAALADase activity is inhibited by beta-NAAG, quisqualic acid, 2-(phosphonomethyl) pentanedioic acid (PMPA) and EDTA. Activated by cobalt. In terms of biological role, has both folate hydrolase and N-acetylated-alpha-linked-acidic dipeptidase (NAALADase) activity. Has a preference for tri-alpha-glutamate peptides. In the intestine, required for the uptake of folate. In the brain, modulates excitatory neurotransmission through the hydrolysis of the neuropeptide, N-aceylaspartylglutamate (NAAG), thereby releasing glutamate. Involved in prostate tumor progression. Its function is as follows. Also exhibits a dipeptidyl-peptidase IV type activity. In vitro, cleaves Gly-Pro-AMC. This is Glutamate carboxypeptidase 2 from Homo sapiens (Human).